Here is a 200-residue protein sequence, read N- to C-terminus: NADH-quinone oxidoreductase subunit B (200 aa).

The [4Fe-4S] cluster site is built by Cys-78, Cys-79, Cys-144, and Cys-174.

Belongs to the complex I 20 kDa subunit family. In terms of assembly, NDH-1 is composed of 14 different subunits. Subunits NuoB, C, D, E, F, and G constitute the peripheral sector of the complex. Requires [4Fe-4S] cluster as cofactor.

It is found in the cell membrane. The enzyme catalyses a quinone + NADH + 5 H(+)(in) = a quinol + NAD(+) + 4 H(+)(out). Functionally, NDH-1 shuttles electrons from NADH, via FMN and iron-sulfur (Fe-S) centers, to quinones in the respiratory chain. The immediate electron acceptor for the enzyme in this species is believed to be ubiquinone. Couples the redox reaction to proton translocation (for every two electrons transferred, four hydrogen ions are translocated across the cytoplasmic membrane), and thus conserves the redox energy in a proton gradient. In Dehalococcoides mccartyi (strain ATCC BAA-2100 / JCM 16839 / KCTC 5957 / BAV1), this protein is NADH-quinone oxidoreductase subunit B.